Consider the following 295-residue polypeptide: Ethanolamine ammonia-lyase small subunit (295 aa).

3 residues coordinate adenosylcob(III)alamin: valine 207, glutamate 228, and cysteine 258.

It belongs to the EutC family. In terms of assembly, the basic unit is a heterodimer which dimerizes to form tetramers. The heterotetramers trimerize; 6 large subunits form a core ring with 6 small subunits projecting outwards. Requires adenosylcob(III)alamin as cofactor.

It is found in the bacterial microcompartment. The catalysed reaction is ethanolamine = acetaldehyde + NH4(+). It participates in amine and polyamine degradation; ethanolamine degradation. Catalyzes the deamination of various vicinal amino-alcohols to oxo compounds. Allows this organism to utilize ethanolamine as the sole source of nitrogen and carbon in the presence of external vitamin B12. In Escherichia coli (strain UTI89 / UPEC), this protein is Ethanolamine ammonia-lyase small subunit.